A 1086-amino-acid chain; its full sequence is Lon protease homolog, mitochondrial (1086 aa).

The N-terminal 55 residues, 1–55 (MLRTSCTSSLRRVVGKYVVSPLVASQIRFATSSVRSQPYLLNSELTELPAQFKRY), are a transit peptide targeting the mitochondrion. The tract at residues 61-176 (TEKPEGDVPE…EPNEIVTNAG (116 aa)) is disordered. Residues 69-83 (PESGPEPSGESGISE) are compositionally biased toward low complexity. Over residues 85–120 (SNVENDKHDGNDEIKPEAEKNEKDEIEKPEIDKDAI) the composition is skewed to basic and acidic residues. The span at 124-163 (DGVSESSVENVSGSSSAAGGASAPPSGNSNNNNNNNNNNN) shows a compositional bias: low complexity. Positions 183-406 (LLAIPMKDRP…KALELLKVEL (224 aa)) constitute a Lon N-terminal domain. 558 to 565 (GPPGTGKT) lines the ATP pocket. Composition is skewed to basic and acidic residues over residues 767–782 (EARE…EAKS) and 815–827 (KVDE…SEEL). Disordered stretches follow at residues 767-788 (EARE…ITGS) and 800-835 (KAQS…EEEE). The Lon proteolytic domain occupies 871–1059 (IPPPGVATGL…QDVFDEIFPN (189 aa)). Residues Ser965 and Lys1008 contribute to the active site.

This sequence belongs to the peptidase S16 family. As to quaternary structure, homohexamer or homoheptamer. Organized in a ring with a central cavity.

It is found in the mitochondrion matrix. It catalyses the reaction Hydrolysis of proteins in presence of ATP.. Its function is as follows. ATP-dependent serine protease that mediates the selective degradation of misfolded, unassembled or oxidatively damaged polypeptides as well as certain short-lived regulatory proteins in the mitochondrial matrix. May also have a chaperone function in the assembly of inner membrane protein complexes. Participates in the regulation of mitochondrial gene expression and in the maintenance of the integrity of the mitochondrial genome. Binds to mitochondrial DNA in a site-specific manner. In Scheffersomyces stipitis (strain ATCC 58785 / CBS 6054 / NBRC 10063 / NRRL Y-11545) (Yeast), this protein is Lon protease homolog, mitochondrial.